The following is a 370-amino-acid chain: Tyrosine-protein kinase transforming protein SEA (370 aa).

The 264-residue stretch at 60–323 (THRSRVIGRG…GLVCELERVL (264 aa)) folds into the Protein kinase domain. ATP-binding positions include 66-74 (IGRGHFGSV) and Lys92. Asp186 acts as the Proton acceptor in catalysis. The residue at position 216 (Tyr216) is a Phosphotyrosine; by autocatalysis. Residues 345–370 (PPFPPAPRGQLPDSEDEEDEEEEVAE) are disordered. The span at 357–370 (DSEDEEDEEEEVAE) shows a compositional bias: acidic residues.

This sequence belongs to the protein kinase superfamily. Tyr protein kinase family.

The enzyme catalyses L-tyrosyl-[protein] + ATP = O-phospho-L-tyrosyl-[protein] + ADP + H(+). In Galliformes, this protein is Tyrosine-protein kinase transforming protein SEA (V-SEA).